The sequence spans 238 residues: Purine nucleoside phosphorylase DeoD-type (238 aa).

His-4 contacts a purine D-ribonucleoside. Residues Gly-20, Arg-24, Arg-43, and 87 to 90 (RVGS) contribute to the phosphate site. Residues 179-181 (EME) and 203-204 (SD) contribute to the a purine D-ribonucleoside site. The active-site Proton donor is the Asp-204.

This sequence belongs to the PNP/UDP phosphorylase family. Homohexamer; trimer of homodimers.

The catalysed reaction is a purine D-ribonucleoside + phosphate = a purine nucleobase + alpha-D-ribose 1-phosphate. The enzyme catalyses a purine 2'-deoxy-D-ribonucleoside + phosphate = a purine nucleobase + 2-deoxy-alpha-D-ribose 1-phosphate. Catalyzes the reversible phosphorolytic breakdown of the N-glycosidic bond in the beta-(deoxy)ribonucleoside molecules, with the formation of the corresponding free purine bases and pentose-1-phosphate. In Actinobacillus succinogenes (strain ATCC 55618 / DSM 22257 / CCUG 43843 / 130Z), this protein is Purine nucleoside phosphorylase DeoD-type.